We begin with the raw amino-acid sequence, 167 residues long: uncharacterized protein (167 aa).

A disordered region spans residues 95–114; that stretch reads AHSLHHQSHQSDVQVHAKGN.

This is an uncharacterized protein from Haemophilus influenzae (Bacteriophage HP1).